A 354-amino-acid polypeptide reads, in one-letter code: Ornithine transcarbamylase, mitochondrial (354 aa).

A mitochondrion-targeting transit peptide spans 1 to 32 (MLSNLRILLNKAALRKAHTSMVRNFRYGKPVQ). Lys70 carries the post-translational modification N6-acetyllysine; alternate. Lys70 bears the N6-succinyllysine; alternate mark. Lys80 carries the N6-succinyllysine modification. The residue at position 88 (Lys88) is an N6-acetyllysine; alternate. Lys88 is subject to N6-succinyllysine; alternate. 90–93 (STRT) is a carbamoyl phosphate binding site. The residue at position 133 (Ser133) is a Phosphoserine. Arg141 contacts carbamoyl phosphate. The residue at position 144 (Lys144) is an N6-acetyllysine; alternate. N6-succinyllysine; alternate is present on Lys144. Positions 168 and 171 each coordinate carbamoyl phosphate. Residue Asn199 participates in L-ornithine binding. N6-acetyllysine; alternate occurs at positions 221, 231, and 238. An N6-succinyllysine; alternate mark is found at Lys221, Lys231, and Lys238. The L-ornithine site is built by Asp263, Ser267, and Met268. An N6-succinyllysine mark is found at Lys274 and Lys289. Lys292 is subject to N6-acetyllysine; alternate. Position 292 is an N6-succinyllysine; alternate (Lys292). Residue Cys303 is the Proton acceptor of the active site. 303–304 (CL) is a binding site for carbamoyl phosphate. Lys307 carries the N6-acetyllysine; alternate modification. N6-succinyllysine; alternate is present on Lys307. Arg330 contacts carbamoyl phosphate.

This sequence belongs to the aspartate/ornithine carbamoyltransferase superfamily. OTCase family. Homotrimer. Post-translationally, acetylation at Lys-88 negatively regulates ornithine carbamoyltransferase activity in response to nutrient signals.

The protein resides in the mitochondrion matrix. It catalyses the reaction carbamoyl phosphate + L-ornithine = L-citrulline + phosphate + H(+). It participates in nitrogen metabolism; urea cycle; L-citrulline from L-ornithine and carbamoyl phosphate: step 1/1. Negatively regulated by lysine acetylation. Its function is as follows. Catalyzes the second step of the urea cycle, the condensation of carbamoyl phosphate with L-ornithine to form L-citrulline. The urea cycle ensures the detoxification of ammonia by converting it to urea for excretion. This Rattus norvegicus (Rat) protein is Ornithine transcarbamylase, mitochondrial.